We begin with the raw amino-acid sequence, 963 residues long: Protein NLP2 (963 aa).

Positions 635–716 (RRPGEKRRTK…IDSVQGVQGS (82 aa)) constitute an RWP-RK domain. The segment covering 734-755 (MSGTGTSFKNPNAQTENGVSAQ) has biased composition (polar residues). The interval 734 to 794 (MSGTGTSFKN…QSTNTGTTSN (61 aa)) is disordered. Low complexity predominate over residues 756–794 (GTAAAPKSPPSSSCSHSSGSSTCCSTGANQSTNTGTTSN). The region spanning 862–945 (ASKVKATFGE…RTIKISVHEA (84 aa)) is the PB1 domain.

Its subcellular location is the nucleus. Its function is as follows. Probable transcription factor. The chain is Protein NLP2 (NLP2) from Arabidopsis thaliana (Mouse-ear cress).